A 797-amino-acid chain; its full sequence is N-acetylneuraminate (7)9-O-acetyltransferase (797 aa).

The Cytoplasmic portion of the chain corresponds to 1 to 18 (MAALAYNLGKREINHYFS). A helical membrane pass occupies residues 19-39 (VRSAKVLALVAVLLLAACHLA). The Lumenal segment spans residues 40–313 (SRRYRGNDSC…QPRPPVTLIQ (274 aa)). Asn-46 carries N-linked (GlcNAc...) asparagine glycosylation. Ser-94 functions as the Acyl-ester intermediate in the catalytic mechanism. N-linked (GlcNAc...) asparagine glycosylation is found at Asn-175 and Asn-187. Active-site residues include Asp-270 and His-273. A helical membrane pass occupies residues 314–334 (KLAACFFTLSIIGYLIFYIIH). The Cytoplasmic segment spans residues 335–363 (RNAHRKNKPCTDLESGEEKKNIINTPVSS). The helical transmembrane segment at 364–384 (LEILLQSFCKLGLIMAYFYMC) threads the bilayer. Residues 385–395 (DRANLFMKENK) lie on the Lumenal side of the membrane. A helical membrane pass occupies residues 396-416 (FYTHSSFFIPIIYILVLGVFY). The Cytoplasmic segment spans residues 417–439 (NENTKETKVLNREQTDEWKGWMQ). The chain crosses the membrane as a helical span at residues 440–460 (LVILIYHISGASTFLPVYMHI). Arg-461 is a topological domain (lumenal). A helical membrane pass occupies residues 462 to 482 (VLVAAYLFQTGYGHFSYFWIK). At 483-486 (GDFG) the chain is on the cytoplasmic side. A helical membrane pass occupies residues 487 to 507 (IYRVCQVLFRLNFLVVVLCIV). The Lumenal portion of the chain corresponds to 508-513 (MDRPYQ). Residues 514–534 (FYYFVPLVTVWFMVIYVTLAL) traverse the membrane as a helical segment. Residues 535 to 547 (WPQIIQKKANGNC) lie on the Cytoplasmic side of the membrane. The chain crosses the membrane as a helical span at residues 548–568 (FWHFGLLLKLGFLLLFICFLA). Residues 569-605 (YSQGAFEKIFSLWPLSKCFELKGNVYEWWFRWRLDRY) lie on the Lumenal side of the membrane. Residues 606-626 (VVFHGMLFAFIYLALQKRQIL) form a helical membrane-spanning segment. The Cytoplasmic portion of the chain corresponds to 627 to 638 (SEGKGEPLFSNK). The helical transmembrane segment at 639 to 659 (ISNFLLFISVVSFLTYSIWAS) threads the bilayer. Topologically, residues 660-671 (SCKNKAECNELH) are lumenal. A helical transmembrane segment spans residues 672-692 (PSVSVVQILAFILIRNIPGYA). The Cytoplasmic segment spans residues 693 to 698 (RSVYSS). The chain crosses the membrane as a helical span at residues 699–719 (FFAWFGKISLELFICQYHIWL). Over 720–725 (AADTRG) the chain is Lumenal. Residues 726–746 (ILVLIPGNPMLNIIVSTFIFV) traverse the membrane as a helical segment. Residues 747-770 (CVAHEISQITNDLAQIIIPKDNSS) are Cytoplasmic-facing. The chain crosses the membrane as a helical span at residues 771 to 791 (LLKRLACIAAFFCGLLILSSI). Residues 792–797 (QDKSKH) lie on the Lumenal side of the membrane.

It belongs to the PC-esterase family. CASD1 subfamily. In terms of processing, N-glycosylated. In terms of tissue distribution, highly expressed in peripheral B lymphocytes.

It localises to the golgi apparatus membrane. The enzyme catalyses CMP-N-acetyl-beta-neuraminate + acetyl-CoA = CMP-N-acetyl-9-O-acetyl-beta-neuraminate + CoA. The catalysed reaction is a ganglioside GD3 (d18:1(4E)) + acetyl-CoA = a ganglioside Ac-O-7-GD3(d18:1(4E)) + CoA. It catalyses the reaction CMP-N-acetyl-beta-neuraminate + acetyl-CoA = CMP-N-acetyl-7-O-acetyl-beta-neuraminate + CoA. Functionally, key enzyme in the biosynthesis of O-acetylated (O-Ac) sialoglycans such as gangliosides O-AcGD3 and O-AcGD2, which affect various processes such as cell-cell interactions, host-pathogen recognition. Catalyzes the transfer of an acetyl group from a donor, the acetyl-coenzyme-A molecule (acetyl-CoA), to the C7/8/9 OH-position of a sialic acid residue. The primary site of O-acetyl group transfer on sialic acid seems to depend on cell type and can be C7, from which the O-acetyl group could subsequently migrate to the C8 and then to the C9 position, or at C9 with possibility of migrating to the C8 and then to the C7 position. Together with ST8SIA1 (GD3 synthase) it increases the levels of ganglioside Ac-O-7-GD3. Can transfer the acetyl group from acetyl-CoA to free sialate (N-acetylneuraminate, Neu5Ac) in vitro, but has preferred substrate specificity for CMP-activated sialate (CMP-Neu5Ac), resulting in the formation of 9-O-acetylated CMP-Neu5Ac (CMP-Neu5,9Ac2). CMP-Neu5,9Ac2 may be used by sialyltransferases as a sialate donor for glycoconjugate acceptors such as ganglioside GD3. O-acetylation at position C9 of ganglioside GD3 can counteract the pro-apoptotic effects of the ganglioside GD3 in tumor cells. In Homo sapiens (Human), this protein is N-acetylneuraminate (7)9-O-acetyltransferase.